We begin with the raw amino-acid sequence, 1473 residues long: MYSSSNSFMGGANSARPGQPPFMQQPSYGQQTTQQQQQHQTGLAPQPNGYGSQLSGFGGSHLQPQPTGFSPGQLQSQMTGFPQLQQQPGFQTSAQPPQLTGYSIQSQAPQLQVPSSTGLPVRLAPQTSSEIADSFRGSAGAAPPPPPKTAGSKIPNIRLSFITAQDQAKFEQLFKSAVGDSQTMSGEKAKDLLLRSRLPGSDLSKIWVLSDTTKSGQLFFPEFALAMYLCNIRITGRGLPDALPEKIKNEVSSMVDIISFQVPDTQPEMAFPTNAPKFDAPLLENKSAPPAPQQPQPQQPTHSQLLTQLTAQPTGFHTQPTGIQSTQASFPGQSSSLVPQATAFPGQSQQQFLQTQPTGLMSNPQPTGYSGLRPPVPPMPTSLGPNLSPAQTGGVSGLVAQPTGVPGQWGFVNAPSSGLPNIEALKQQLMPQPGREGGFSAAGLSGNAHIPWAITKEEKKIYDDLFRAWDGFHKGFIGGDTAIEIMGQSGLDQKDLERIWTLADPHNRGRLNMDEFAVAMHLIYRKLNGYPVPNRLPPELVPPSTRNLNDSIGTIKSMLSQDAESRKASGAFLQPQKTGVSYLKDHSFRGGSGVSPGFGRKDATLFKNNDEAASGYRSSARRRVGNNGRTPSPATSQTSEEELSVGQLRKKIRETQIMLDAVDFQDENRAEEEDALDRRDRREVESLLDRIRRVQDDIDTHPDAAFRNLDNGAERRSLRRQLQSYEDQVPQVASDVRRVEREIAEAKLELFRLKDAKAHPNSASNIVGTGPGGAVTEADRIKARARARMQARAAELAGRPTPSSQEDDGAAARRVEAESAKVKADREKNDAMTRDVEDSVKDFARSLEDTLKDASENSTREHERRRWEDALGVEDVIRDFIYDLKRNSRTAYVRKEEASRSMHEEHERSRYDEAPATRPSPPPSTGSTGSLPGSTHEDRVAAARERAQKRIAERMAAAGLKPHNNTAETLLQRQEREKKEREDRLKQAEEEDTRREQERQRRLAEEQGGSMAQPAKPASKKPPPAPPSRRGRTDSAGQAEAKRAAEESAIVEQAAREQTIREEEEAQQERKRLEDDARKREEEFQREKEAQEARLRALQEQVQQGKIKKQEAKRRKEEADRLAKEQEAKLTVQRAELEMAKERERQLQLELEALDEESSSDEEGPENITPQHSTPGQSQILPEVDIAAPVAPSALVPPVPGPEPDRPTSATSSPTSDRTGLAHLPLETESKNPYFKKISLPAESQVATPQPISKAPVTSPKADVQSTNPFHRLAQQQENAKPAFTAAGPIERVSRARPEVDDDWSAAGSDFDSSDDDERPGGGSAKQLASILFGTMAPPRPLSAMDDKSPSKPSTPAPDTPVAASTAPEADGTLSIPSASIPPPPPPVVAQVPSIALSSGPPDAPPPPPPPPVPHMAPSAPPPGIPPPPAPPAAPAGAPNRSALLASIQAGKGLRKVQTNDRSLSSVAGRVLD.

Disordered regions lie at residues 1-121 (MYSS…GLPV) and 134-153 (SFRG…AGSK). The span at 24–47 (QQPSYGQQTTQQQQQHQTGLAPQP) shows a compositional bias: low complexity. A compositionally biased stretch (polar residues) spans 62-78 (LQPQPTGFSPGQLQSQM). Over residues 79 to 92 (TGFPQLQQQPGFQT) the composition is skewed to low complexity. Residues 93 to 118 (SAQPPQLTGYSIQSQAPQLQVPSSTG) show a composition bias toward polar residues. An EH 1 domain is found at 166-254 (DQAKFEQLFK…EKIKNEVSSM (89 aa)). One can recognise an EF-hand 1 domain in the interval 198–233 (LPGSDLSKIWVLSDTTKSGQLFFPEFALAMYLCNIR). A disordered region spans residues 266 to 366 (QPEMAFPTNA…PTGLMSNPQP (101 aa)). Positions 289–298 (PPAPQQPQPQ) are enriched in pro residues. The span at 301–339 (THSQLLTQLTAQPTGFHTQPTGIQSTQASFPGQSSSLVP) shows a compositional bias: polar residues. A compositionally biased stretch (low complexity) spans 344 to 360 (FPGQSQQQFLQTQPTGL). Residues 458–547 (EKKIYDDLFR…PELVPPSTRN (90 aa)) enclose the EH 2 domain. The region spanning 491 to 526 (LDQKDLERIWTLADPHNRGRLNMDEFAVAMHLIYRK) is the EF-hand 2 domain. The disordered stretch occupies residues 609–645 (NDEAASGYRSSARRRVGNNGRTPSPATSQTSEEELSV). The span at 627 to 638 (NGRTPSPATSQT) shows a compositional bias: polar residues. The stretch at 678-759 (RRDRREVESL…LFRLKDAKAH (82 aa)) forms a coiled coil. 3 disordered regions span residues 793–837 (AAEL…RDVE), 891–1265 (AYVR…ADVQ), and 1277–1473 (QENA…RVLD). Basic and acidic residues-rich tracts occupy residues 810–837 (AAAR…RDVE) and 893–915 (VRKE…DEAP). Residues 925–934 (TGSTGSLPGS) are compositionally biased toward low complexity. Basic and acidic residues-rich tracts occupy residues 935 to 953 (THED…RIAE), 973 to 1005 (RQER…RLAE), 1054 to 1097 (AARE…RLRA), 1108 to 1128 (KKQE…EQEA), and 1135 to 1147 (AELE…ERQL). Residues 963–1163 (HNNTAETLLQ…LDEESSSDEE (201 aa)) are a coiled coil. Residues 1152-1165 (EALDEESSSDEEGP) are compositionally biased toward acidic residues. Polar residues-rich tracts occupy residues 1168–1180 (ITPQ…QSQI) and 1208–1218 (TSATSSPTSDR). Pro residues predominate over residues 1402–1434 (PDAPPPPPPPPVPHMAPSAPPPGIPPPPAPPAA). Residues 1440–1457 (NRSALLASIQAGKGLRKV) form the WH2 domain.

It belongs to the PAN1 family. In terms of assembly, component of the PAN1 actin cytoskeleton-regulatory complex.

Its subcellular location is the cell membrane. It localises to the endosome membrane. It is found in the cytoplasm. The protein localises to the cytoskeleton. The protein resides in the actin patch. In terms of biological role, component of the PAN1 actin cytoskeleton-regulatory complex required for the internalization of endosomes during actin-coupled endocytosis. The complex links the site of endocytosis to the cell membrane-associated actin cytoskeleton. Mediates uptake of external molecules and vacuolar degradation of plasma membrane proteins. Plays a role in the proper organization of the cell membrane-associated actin cytoskeleton and promotes its destabilization. This is Actin cytoskeleton-regulatory complex protein pan1 (pan1) from Aspergillus oryzae (strain ATCC 42149 / RIB 40) (Yellow koji mold).